We begin with the raw amino-acid sequence, 180 residues long: Peroxisome assembly protein 22 (180 aa).

Residues 15–32 (LGIVGTAIAVLVTSYYIY) form a helical membrane-spanning segment.

The protein belongs to the peroxin-22 family.

It localises to the peroxisome membrane. Involved in peroxisome biogenesis. This Saccharomyces cerevisiae (strain ATCC 204508 / S288c) (Baker's yeast) protein is Peroxisome assembly protein 22 (PEX22).